A 141-amino-acid polypeptide reads, in one-letter code: Large ribosomal subunit protein uL11 (141 aa).

This sequence belongs to the universal ribosomal protein uL11 family. Part of the ribosomal stalk of the 50S ribosomal subunit. Interacts with L10 and the large rRNA to form the base of the stalk. L10 forms an elongated spine to which L12 dimers bind in a sequential fashion forming a multimeric L10(L12)X complex. Post-translationally, one or more lysine residues are methylated.

Its function is as follows. Forms part of the ribosomal stalk which helps the ribosome interact with GTP-bound translation factors. This chain is Large ribosomal subunit protein uL11, found in Agathobacter rectalis (strain ATCC 33656 / DSM 3377 / JCM 17463 / KCTC 5835 / VPI 0990) (Eubacterium rectale).